A 214-amino-acid chain; its full sequence is Pyrrolidone-carboxylate peptidase (214 aa).

Active-site residues include Glu79, Cys142, and His166.

The protein belongs to the peptidase C15 family. In terms of assembly, homotetramer.

It localises to the cytoplasm. It carries out the reaction Release of an N-terminal pyroglutamyl group from a polypeptide, the second amino acid generally not being Pro.. In terms of biological role, removes 5-oxoproline from various penultimate amino acid residues except L-proline. This Fusobacterium nucleatum subsp. nucleatum (strain ATCC 25586 / DSM 15643 / BCRC 10681 / CIP 101130 / JCM 8532 / KCTC 2640 / LMG 13131 / VPI 4355) protein is Pyrrolidone-carboxylate peptidase.